The following is a 345-amino-acid chain: Probable 3'(2'),5'-bisphosphate nucleotidase 4 (345 aa).

Asp-46 (proton acceptor) is an active-site residue. Residues Glu-71, Asp-134, Val-136, and Asp-137 each coordinate Mg(2+). Residue Thr-139 is the Proton acceptor of the active site. Residues Thr-139, Ser-247, Lys-250, and Arg-264 each coordinate adenosine 3',5'-bisphosphate. AMP contacts are provided by Ser-247, Lys-250, and Arg-264.

Belongs to the inositol monophosphatase superfamily. Mg(2+) serves as cofactor.

The enzyme catalyses 3'-phosphoadenylyl sulfate + H2O = adenosine 5'-phosphosulfate + phosphate. The catalysed reaction is adenosine 3',5'-bisphosphate + H2O = AMP + phosphate. It carries out the reaction adenosine 2',5'-bisphosphate + H2O = AMP + phosphate. It catalyses the reaction 1D-myo-inositol 1,4-bisphosphate + H2O = 1D-myo-inositol 4-phosphate + phosphate. The enzyme catalyses 1D-myo-inositol 1,3,4-trisphosphate + H2O = 1D-myo-inositol 3,4-bisphosphate + phosphate. It functions in the pathway signal transduction; phosphatidylinositol signaling pathway. In terms of biological role, phosphatase that converts adenosine 3'-phosphate 5'-phosphosulfate (PAPS) to adenosine 5'-phosphosulfate (APS) and 3'(2')-phosphoadenosine 5'-phosphate (PAP) to AMP. Is also able to hydrolyze inositol 1,4-bisphosphate and inositol 1,3,4-trisphosphate. This is Probable 3'(2'),5'-bisphosphate nucleotidase 4 (SAL4) from Arabidopsis thaliana (Mouse-ear cress).